We begin with the raw amino-acid sequence, 141 residues long: uncharacterized protein (141 aa).

This is an uncharacterized protein from Caenorhabditis elegans.